The sequence spans 78 residues: Mitotic-spindle organizing protein 1 (78 aa).

Residue Ala2 is modified to N-acetylalanine.

The protein belongs to the MOZART1 family. Associates with the gamma-tubulin ring complex (gTuRC) consisting of TUBGCP2, TUBGCP3, TUBGCP4, TUBGCP5 and TUBGCP6 and gamma-tubulin TUBG1 or TUBG2; within the complex, interacts with TUBGCP3 and TUBGCP6 to form a luminal bridge with actin that stabilizes the initial structure during complex assembly. Interacts with TUBG1.

It localises to the cytoplasm. Its subcellular location is the cytoskeleton. It is found in the microtubule organizing center. The protein localises to the centrosome. The protein resides in the spindle. Required for the recruitment and the assembly of the gamma-tubulin ring complex (gTuRC) at the centrosome. The gTuRC regulates the minus-end nucleation of alpha-beta tubulin heterodimers that grow into microtubule protafilaments, a critical step in centrosome duplication and spindle formation. The chain is Mitotic-spindle organizing protein 1 (Mzt1) from Mus musculus (Mouse).